The primary structure comprises 197 residues: FMN-dependent NADH:quinone oxidoreductase (197 aa).

Residues serine 10, 16–18, 93–96, and 137–140 each bind FMN; these read SQS, MYNF, and TRGG.

The protein belongs to the azoreductase type 1 family. As to quaternary structure, homodimer. It depends on FMN as a cofactor.

It carries out the reaction 2 a quinone + NADH + H(+) = 2 a 1,4-benzosemiquinone + NAD(+). The catalysed reaction is N,N-dimethyl-1,4-phenylenediamine + anthranilate + 2 NAD(+) = 2-(4-dimethylaminophenyl)diazenylbenzoate + 2 NADH + 2 H(+). Functionally, quinone reductase that provides resistance to thiol-specific stress caused by electrophilic quinones. Also exhibits azoreductase activity. Catalyzes the reductive cleavage of the azo bond in aromatic azo compounds to the corresponding amines. This Shewanella frigidimarina (strain NCIMB 400) protein is FMN-dependent NADH:quinone oxidoreductase.